Reading from the N-terminus, the 356-residue chain is Uroporphyrinogen decarboxylase (356 aa).

Substrate-binding positions include 27–31, Asp77, Tyr154, Thr209, and His327; that span reads RQAGR.

This sequence belongs to the uroporphyrinogen decarboxylase family. Homodimer.

It localises to the cytoplasm. The enzyme catalyses uroporphyrinogen III + 4 H(+) = coproporphyrinogen III + 4 CO2. It functions in the pathway porphyrin-containing compound metabolism; protoporphyrin-IX biosynthesis; coproporphyrinogen-III from 5-aminolevulinate: step 4/4. Catalyzes the decarboxylation of four acetate groups of uroporphyrinogen-III to yield coproporphyrinogen-III. In Cellvibrio japonicus (strain Ueda107) (Pseudomonas fluorescens subsp. cellulosa), this protein is Uroporphyrinogen decarboxylase.